Reading from the N-terminus, the 62-residue chain is Large ribosomal subunit protein bL28 (62 aa).

Belongs to the bacterial ribosomal protein bL28 family.

This chain is Large ribosomal subunit protein bL28, found in Syntrophomonas wolfei subsp. wolfei (strain DSM 2245B / Goettingen).